Consider the following 210-residue polypeptide: Histidine biosynthesis bifunctional protein HisIE (210 aa).

The interval 1–106 (MTNYKIDFSK…SCFNTEVPFS (106 aa)) is phosphoribosyl-AMP cyclohydrolase. The phosphoribosyl-ATP pyrophosphohydrolase stretch occupies residues 107 to 210 (VQTLAQTVQD…KGERQNIEQW (104 aa)).

This sequence in the N-terminal section; belongs to the PRA-CH family. In the C-terminal section; belongs to the PRA-PH family.

The protein resides in the cytoplasm. The enzyme catalyses 1-(5-phospho-beta-D-ribosyl)-ATP + H2O = 1-(5-phospho-beta-D-ribosyl)-5'-AMP + diphosphate + H(+). The catalysed reaction is 1-(5-phospho-beta-D-ribosyl)-5'-AMP + H2O = 1-(5-phospho-beta-D-ribosyl)-5-[(5-phospho-beta-D-ribosylamino)methylideneamino]imidazole-4-carboxamide. It participates in amino-acid biosynthesis; L-histidine biosynthesis; L-histidine from 5-phospho-alpha-D-ribose 1-diphosphate: step 2/9. It functions in the pathway amino-acid biosynthesis; L-histidine biosynthesis; L-histidine from 5-phospho-alpha-D-ribose 1-diphosphate: step 3/9. The chain is Histidine biosynthesis bifunctional protein HisIE (hisI) from Staphylococcus aureus (strain COL).